A 1093-amino-acid chain; its full sequence is Regulatory protein SWI4 (1093 aa).

In terms of domain architecture, HTH APSES-type spans 37 to 147 (IEIATYSETD…FQFDPNNPPP (111 aa)). The segment at residues 71–92 (ITQVFKIAQFSKTKRTKILEKE) is a DNA-binding region (H-T-H motif). The segment at 138 to 210 (FQFDPNNPPP…NQPNPSPLQN (73 aa)) is disordered. Residues 152–172 (NSILRKTSPGTKITSPSSYNK) are compositionally biased toward polar residues. Residues 179–201 (SSSSTSATTTAANKKGKKNASIN) show a composition bias toward low complexity. At Ser255 the chain carries Phosphoserine. Residues 448 to 457 (NSMNMSSRSM) show a composition bias toward low complexity. The disordered stretch occupies residues 448-468 (NSMNMSSRSMTPFSAGNTSSQ). A compositionally biased stretch (polar residues) spans 458-468 (TPFSAGNTSSQ). ANK repeat units follow at residues 520–549 (QGHTPLHWATAMANIPLIKMLITLNANALQ) and 641–670 (IGNTPLHLSALNLNFEVYNRLVYLGASTDI). Position 806 is a phosphoserine (Ser806). Disordered stretches follow at residues 813–855 (RSQS…SSLL) and 973–1017 (QDEE…DAKF). A compositionally biased stretch (basic and acidic residues) spans 818-837 (SDEKEKAKDNENQVEKKKDP). Positions 846–855 (PSLESPSSLL) are enriched in low complexity. Residues 1000-1010 (KSTSETSSPKN) show a composition bias toward polar residues.

As to quaternary structure, component of the transcription complex SCB-binding factor (SBF) composed of SWI6 and SWI4. Interacts with MSA2.

Its function is as follows. Part of a complex involved in cell-cycle-dependent transcription. SWI4 and SWI6 are required for formation of the cell-cycle box factor-DNA complex. The repeated element in the upstream region of HO (5'-CACGAAAA-3') is called the cell cycle box (CCB). The sequence is that of Regulatory protein SWI4 (SWI4) from Saccharomyces cerevisiae (strain ATCC 204508 / S288c) (Baker's yeast).